Here is a 301-residue protein sequence, read N- to C-terminus: ATP synthase gamma chain (301 aa).

This sequence belongs to the ATPase gamma chain family. In terms of assembly, F-type ATPases have 2 components, CF(1) - the catalytic core - and CF(0) - the membrane proton channel. CF(1) has five subunits: alpha(3), beta(3), gamma(1), delta(1), epsilon(1). CF(0) has three main subunits: a, b and c.

It localises to the cell inner membrane. Its function is as follows. Produces ATP from ADP in the presence of a proton gradient across the membrane. The gamma chain is believed to be important in regulating ATPase activity and the flow of protons through the CF(0) complex. The protein is ATP synthase gamma chain of Helicobacter pylori (strain G27).